Consider the following 258-residue polypeptide: Putative phosphoenolpyruvate synthase regulatory protein (258 aa).

An ADP-binding site is contributed by 146–153 (GVSRVGKT).

The protein belongs to the pyruvate, phosphate/water dikinase regulatory protein family. PSRP subfamily.

The enzyme catalyses [pyruvate, water dikinase] + ADP = [pyruvate, water dikinase]-phosphate + AMP + H(+). The catalysed reaction is [pyruvate, water dikinase]-phosphate + phosphate + H(+) = [pyruvate, water dikinase] + diphosphate. Functionally, bifunctional serine/threonine kinase and phosphorylase involved in the regulation of the phosphoenolpyruvate synthase (PEPS) by catalyzing its phosphorylation/dephosphorylation. The chain is Putative phosphoenolpyruvate synthase regulatory protein from Thiobacillus denitrificans (strain ATCC 25259 / T1).